The sequence spans 226 residues: UPF0173 metal-dependent hydrolase Msed_2125 (226 aa).

Belongs to the UPF0173 family.

In Metallosphaera sedula (strain ATCC 51363 / DSM 5348 / JCM 9185 / NBRC 15509 / TH2), this protein is UPF0173 metal-dependent hydrolase Msed_2125.